Here is a 1074-residue protein sequence, read N- to C-terminus: Semaphorin-5A (1074 aa).

Residues 1-22 form the signal peptide; the sequence is MKGACILAWLFSSLGVWRLARP. One can recognise a Sema domain in the interval 35–484; sequence HPVVSYKEIG…LQEHVVKIPL (450 aa). 2 cysteine pairs are disulfide-bonded: cysteine 104-cysteine 114 and cysteine 131-cysteine 140. N-linked (GlcNAc...) asparagine glycosylation is found at asparagine 147, asparagine 168, asparagine 227, and asparagine 277. Intrachain disulfides connect cysteine 254/cysteine 357 and cysteine 278/cysteine 320. Residues asparagine 323 and asparagine 367 are each glycosylated (N-linked (GlcNAc...) asparagine). Positions 486–533 constitute a PSI domain; it reads RCHFHQTRGACIGAQDPYCGWDAVMKKCTSLEESLSMTQWDQSVPTCP. 2 N-linked (GlcNAc...) asparagine glycosylation sites follow: asparagine 536 and asparagine 591. TSP type-1 domains follow at residues 540 to 593, 595 to 651, and 653 to 702; these read DGSF…TNCS, NGGW…LLCP, and HVFW…NACP. 6 disulfide bridges follow: cysteine 607/cysteine 644, cysteine 611/cysteine 650, cysteine 622/cysteine 634, cysteine 665/cysteine 696, cysteine 669/cysteine 701, and cysteine 680/cysteine 686. The N-linked (GlcNAc...) asparagine glycan is linked to asparagine 717. 3 TSP type-1 domains span residues 784 to 839, 841 to 896, and 897 to 944; these read NGAW…LPCP, DGVW…QTCP, and ENWS…VFDS. Cystine bridges form between cysteine 796-cysteine 833, cysteine 800-cysteine 838, cysteine 811-cysteine 823, cysteine 853-cysteine 890, cysteine 857-cysteine 895, and cysteine 868-cysteine 880. N-linked (GlcNAc...) asparagine glycosylation is found at asparagine 898 and asparagine 933. Residues 969 to 989 form a helical membrane-spanning segment; sequence FHMMAVGLSSSILGCLLTLLV. Asparagine 1015 carries an N-linked (GlcNAc...) asparagine glycan.

Binds PLXNB3.

The protein resides in the membrane. Functionally, bifunctional axonal guidance cue regulated by sulfated proteoglycans; attractive effects result from interactions with heparan sulfate proteoglycans (HSPGs), while the inhibitory effects depend on interactions with chondroitin sulfate proteoglycans (CSPGs). Ligand for receptor PLXNB3. In glioma cells, SEMA5A stimulation of PLXNB3 results in the disassembly of F-actin stress fibers, disruption of focal adhesions and cellular collapse as well as inhibition of cell migration and invasion through ARHGDIA-mediated inactivation of RAC1. May promote angiogenesis by increasing endothelial cell proliferation and migration and inhibiting apoptosis. The polypeptide is Semaphorin-5A (Sema5a) (Rattus norvegicus (Rat)).